The primary structure comprises 883 residues: Valine--tRNA ligase (883 aa).

The 'HIGH' region signature appears at 51–61; the sequence is PNVTGKLHLGH. The 'KMSKS' region signature appears at 527 to 531; the sequence is KMSKS. K530 serves as a coordination point for ATP. Residues 811 to 847 are a coiled coil; the sequence is LEALIDLNVEIARLEKELEKWNKEVARVQGKLNNERF.

Belongs to the class-I aminoacyl-tRNA synthetase family. ValS type 1 subfamily. As to quaternary structure, monomer.

It is found in the cytoplasm. It catalyses the reaction tRNA(Val) + L-valine + ATP = L-valyl-tRNA(Val) + AMP + diphosphate. Functionally, catalyzes the attachment of valine to tRNA(Val). As ValRS can inadvertently accommodate and process structurally similar amino acids such as threonine, to avoid such errors, it has a 'posttransfer' editing activity that hydrolyzes mischarged Thr-tRNA(Val) in a tRNA-dependent manner. The polypeptide is Valine--tRNA ligase (Listeria monocytogenes serovar 1/2a (strain ATCC BAA-679 / EGD-e)).